The sequence spans 1304 residues: NAD-dependent protein deacetylase Sir2B (1304 aa).

The Deacetylase sirtuin-type domain occupies 28–466 (TEEEKKKVKE…LISIHNIKMK (439 aa)). Residues 53-72 (GAGI…TGIW) and 274-277 (QNID) each bind NAD(+). The active-site Proton acceptor is the histidine 294. Zn(2+)-binding residues include cysteine 302, cysteine 305, cysteine 327, and cysteine 330. NAD(+)-binding positions include 371 to 373 (GSS), 399 to 401 (NYQ), and valine 417. Disordered regions lie at residues 545 to 585 (EHNN…SSSI), 749 to 827 (KVKS…DKDN), and 1154 to 1203 (EIKY…DDNN). 3 stretches are compositionally biased toward low complexity: residues 548–585 (NNNN…SSSI), 756–806 (NNNN…ISDH), and 1182–1203 (DDNN…DDNN).

It belongs to the sirtuin family. Class IV subfamily. The cofactor is Zn(2+).

The catalysed reaction is N(6)-acetyl-L-lysyl-[protein] + NAD(+) + H2O = 2''-O-acetyl-ADP-D-ribose + nicotinamide + L-lysyl-[protein]. In terms of biological role, regulates the expression of the surface antigen-coding var genes central to the malaria pathogenesis. Cooperates with Sir2A to mediate silencing and mutual exclusive expression of only 1 of the 60 subtelomeric var genes at a time, coding for functionally different but epitopically variant versions of the erythrocyte membrane protein 1 (PfEMP1) molecule, to evade the detection by host immune surveillance. The polypeptide is NAD-dependent protein deacetylase Sir2B (Plasmodium falciparum (isolate 3D7)).